Reading from the N-terminus, the 417-residue chain is Brevican core protein (417 aa).

Positions 1–22 (MAPLFLPLLIALALAPGPTASA) are cleaved as a signal peptide. One can recognise an Ig-like V-type domain in the interval 23–155 (DVLEGDSSED…SSDAVEVKVK (133 aa)). 3 disulfides stabilise this stretch: Cys-57-Cys-137, Cys-179-Cys-250, and Cys-203-Cys-224. The N-linked (GlcNAc...) asparagine glycan is linked to Asn-130. Link domains lie at 157 to 252 (VVFL…YCYA) and 257 to 354 (GELF…YCFR). Asn-267 carries an N-linked (GlcNAc...) asparagine glycan. Disulfide bonds link Cys-277-Cys-352 and Cys-301-Cys-322. A glycan (N-linked (GlcNAc...) asparagine) is linked at Asn-337.

It belongs to the aggrecan/versican proteoglycan family. As to expression, central nervous system.

The protein resides in the secreted. It localises to the extracellular space. Its subcellular location is the extracellular matrix. In terms of biological role, may play a role in the terminally differentiating and the adult nervous system during postnatal development. Could stabilize interactions between hyaluronan (HA) and brain proteoglycans. The protein is Brevican core protein (BCAN) of Felis catus (Cat).